We begin with the raw amino-acid sequence, 490 residues long: Adenylosuccinate synthetase 1, chloroplastic (490 aa).

Residues 1–47 constitute a chloroplast transit peptide; the sequence is MSLSTLSHPAAAAAAATGSGKSHFRTAPAAQSVRFPKARPPVPAAVS. The interval 14-36 is disordered; it reads AAATGSGKSHFRTAPAAQSVRFP. Residues 77–83 and 105–107 contribute to the GTP site; these read GDEGKGK and GHT. Asp-78 (proton acceptor) is an active-site residue. Positions 78 and 105 each coordinate Mg(2+). IMP-binding positions include 78–81, 103–106, Thr-195, Arg-209, Gln-289, Thr-304, and Arg-368; these read DEGK and NAGH. The active-site Proton donor is the His-106. 364–370 serves as a coordination point for substrate; the sequence is TTTGRPR. GTP-binding positions include Arg-370, 396 to 398, and 479 to 481; these read KLD and GVG.

The protein belongs to the adenylosuccinate synthetase family. Homodimer. The cofactor is Mg(2+).

Its subcellular location is the plastid. It localises to the chloroplast. The catalysed reaction is IMP + L-aspartate + GTP = N(6)-(1,2-dicarboxyethyl)-AMP + GDP + phosphate + 2 H(+). Its pathway is purine metabolism; AMP biosynthesis via de novo pathway; AMP from IMP: step 1/2. In terms of biological role, plays an important role in the de novo pathway and in the salvage pathway of purine nucleotide biosynthesis. Catalyzes the first committed step in the biosynthesis of AMP from IMP. The sequence is that of Adenylosuccinate synthetase 1, chloroplastic from Sorghum bicolor (Sorghum).